The primary structure comprises 76 residues: UPF0291 protein GWCH70_1239 (76 aa).

The tract at residues 54–76 (VIDPNGNDVTPKKLKESQKSRLH) is disordered. Basic and acidic residues predominate over residues 63–76 (TPKKLKESQKSRLH).

The protein belongs to the UPF0291 family.

Its subcellular location is the cytoplasm. The sequence is that of UPF0291 protein GWCH70_1239 from Geobacillus sp. (strain WCH70).